The sequence spans 295 residues: N-acetylmuramic acid 6-phosphate etherase (295 aa).

In terms of domain architecture, SIS spans 53 to 216 (AIQRFNNGGR…STMTMIGVGK (164 aa)). The active-site Proton donor is Glu-81. Residue Glu-112 is part of the active site.

The protein belongs to the GCKR-like family. MurNAc-6-P etherase subfamily. In terms of assembly, homodimer.

It carries out the reaction N-acetyl-D-muramate 6-phosphate + H2O = N-acetyl-D-glucosamine 6-phosphate + (R)-lactate. It participates in amino-sugar metabolism; N-acetylmuramate degradation. In terms of biological role, specifically catalyzes the cleavage of the D-lactyl ether substituent of MurNAc 6-phosphate, producing GlcNAc 6-phosphate and D-lactate. In Staphylococcus epidermidis (strain ATCC 35984 / DSM 28319 / BCRC 17069 / CCUG 31568 / BM 3577 / RP62A), this protein is N-acetylmuramic acid 6-phosphate etherase.